The chain runs to 359 residues: DNA replication and repair protein RecF (359 aa).

30–37 is an ATP binding site; it reads GPNGSGKT.

Belongs to the RecF family.

The protein resides in the cytoplasm. The RecF protein is involved in DNA metabolism; it is required for DNA replication and normal SOS inducibility. RecF binds preferentially to single-stranded, linear DNA. It also seems to bind ATP. The protein is DNA replication and repair protein RecF of Psychromonas ingrahamii (strain DSM 17664 / CCUG 51855 / 37).